The chain runs to 249 residues: tRNA pseudouridine synthase A (249 aa).

The Nucleophile role is filled by D52. Residue Y110 coordinates substrate.

It belongs to the tRNA pseudouridine synthase TruA family. As to quaternary structure, homodimer.

It catalyses the reaction uridine(38/39/40) in tRNA = pseudouridine(38/39/40) in tRNA. Functionally, formation of pseudouridine at positions 38, 39 and 40 in the anticodon stem and loop of transfer RNAs. The protein is tRNA pseudouridine synthase A of Exiguobacterium sibiricum (strain DSM 17290 / CCUG 55495 / CIP 109462 / JCM 13490 / 255-15).